The chain runs to 376 residues: Histidinol-phosphate aminotransferase (376 aa).

Positions 1 to 21 (MQPRDLSAHEPYVPGRGTKEV) are disordered. An N6-(pyridoxal phosphate)lysine modification is found at Lys222.

This sequence belongs to the class-II pyridoxal-phosphate-dependent aminotransferase family. Histidinol-phosphate aminotransferase subfamily. It depends on pyridoxal 5'-phosphate as a cofactor.

The enzyme catalyses L-histidinol phosphate + 2-oxoglutarate = 3-(imidazol-4-yl)-2-oxopropyl phosphate + L-glutamate. Its pathway is amino-acid biosynthesis; L-histidine biosynthesis; L-histidine from 5-phospho-alpha-D-ribose 1-diphosphate: step 7/9. This is Histidinol-phosphate aminotransferase from Haloquadratum walsbyi (strain DSM 16790 / HBSQ001).